The chain runs to 359 residues: 3-dehydroquinate synthase (359 aa).

NAD(+) contacts are provided by residues 71-76 (DGEQYK), 105-109 (GVIGD), 129-130 (TT), K142, K151, and 169-172 (CLST). Zn(2+)-binding residues include E184, H247, and H264.

The protein belongs to the sugar phosphate cyclases superfamily. Dehydroquinate synthase family. Co(2+) is required as a cofactor. The cofactor is Zn(2+). NAD(+) serves as cofactor.

It is found in the cytoplasm. It carries out the reaction 7-phospho-2-dehydro-3-deoxy-D-arabino-heptonate = 3-dehydroquinate + phosphate. It participates in metabolic intermediate biosynthesis; chorismate biosynthesis; chorismate from D-erythrose 4-phosphate and phosphoenolpyruvate: step 2/7. Catalyzes the conversion of 3-deoxy-D-arabino-heptulosonate 7-phosphate (DAHP) to dehydroquinate (DHQ). In Shewanella halifaxensis (strain HAW-EB4), this protein is 3-dehydroquinate synthase.